The following is a 790-amino-acid chain: Phenylalanine--tRNA ligase beta subunit (790 aa).

One can recognise a tRNA-binding domain in the interval 39–154 (PDSLNTVVTG…ADTPLGESAC (116 aa)). Positions 404–483 (FSPLSLSVRP…FVQKTQKILP (80 aa)) constitute a B5 domain. Positions 457, 463, 466, and 467 each coordinate Mg(2+). One can recognise an FDX-ACB domain in the interval 694–790 (PIYPASSRDI…KLANIGQGNS (97 aa)).

The protein belongs to the phenylalanyl-tRNA synthetase beta subunit family. Type 1 subfamily. Tetramer of two alpha and two beta subunits. The cofactor is Mg(2+).

It localises to the cytoplasm. It catalyses the reaction tRNA(Phe) + L-phenylalanine + ATP = L-phenylalanyl-tRNA(Phe) + AMP + diphosphate + H(+). In Chlamydia trachomatis serovar D (strain ATCC VR-885 / DSM 19411 / UW-3/Cx), this protein is Phenylalanine--tRNA ligase beta subunit (pheT).